Consider the following 253-residue polypeptide: U2 small nuclear ribonucleoprotein A' (253 aa).

LRR repeat units follow at residues 19-40 (KDRELDLRGHKIPTIENLGIAK), 41-62 (DQDAIDFTDNDISSLGNFPFFP), 63-84 (RLHTLLLARNRVKHIQPTIAST), and 87-108 (NLTTLVLTANNMAELADLDPLR). The 39-residue stretch at 121–159 (NPVTRKEHYRYWVIWRIPSVRFLDYQKVKDAERAKAKEL) folds into the LRRCT domain. The interval 228–253 (ELNEGRIPGGALDAGEDSEDENQMQT) is disordered. The span at 241-253 (AGEDSEDENQMQT) shows a compositional bias: acidic residues.

This sequence belongs to the U2 small nuclear ribonucleoprotein A family. As to quaternary structure, associated with the spliceosome.

The protein resides in the nucleus. Functionally, involved in pre-mRNA splicing. The polypeptide is U2 small nuclear ribonucleoprotein A' (lea1) (Aspergillus fumigatus (strain ATCC MYA-4609 / CBS 101355 / FGSC A1100 / Af293) (Neosartorya fumigata)).